We begin with the raw amino-acid sequence, 74 residues long: Tetrahydromethanopterin S-methyltransferase subunit G (74 aa).

Residues 50–70 (IGILYGLVIGLYLCMLYILLG) traverse the membrane as a helical segment.

This sequence belongs to the MtrG family. As to quaternary structure, the complex is composed of 8 subunits; MtrA, MtrB, MtrC, MtrD, MtrE, MtrF, MtrG and MtrH.

It is found in the cell membrane. It carries out the reaction 5-methyl-5,6,7,8-tetrahydromethanopterin + coenzyme M + 2 Na(+)(in) = 5,6,7,8-tetrahydromethanopterin + methyl-coenzyme M + 2 Na(+)(out). It participates in one-carbon metabolism; methanogenesis from CO(2); methyl-coenzyme M from 5,10-methylene-5,6,7,8-tetrahydromethanopterin: step 2/2. In terms of biological role, part of a complex that catalyzes the formation of methyl-coenzyme M and tetrahydromethanopterin from coenzyme M and methyl-tetrahydromethanopterin. This is an energy-conserving, sodium-ion translocating step. The protein is Tetrahydromethanopterin S-methyltransferase subunit G of Methanopyrus kandleri (strain AV19 / DSM 6324 / JCM 9639 / NBRC 100938).